The primary structure comprises 168 residues: Small ribosomal subunit protein uS9 (168 aa).

The segment covering 1 to 15 (MAQNEETTEAVEAEE) has biased composition (acidic residues). Positions 1–34 (MAQNEETTEAVEAEETLTSYTSESGAAEAAAPKK) are disordered.

The protein belongs to the universal ribosomal protein uS9 family.

This chain is Small ribosomal subunit protein uS9, found in Arthrobacter sp. (strain FB24).